A 698-amino-acid polypeptide reads, in one-letter code: Cytochrome c oxidase subunit 1 (698 aa).

Residues 65–85 (INYLYFSMVTGLSGAALATMI) traverse the membrane as a helical segment. E88 is a Ca(2+) binding site. H111 contacts Fe(II)-heme a. Transmembrane regions (helical) follow at residues 113–133 (LIMVFFVVVPILFGGFANFLI), 147–167 (LNSIGFWIQPCGYILLAKIGF), 304–324 (ILILSVVFAGISTTISFTNLL), 349–369 (IFLTLRMLATITPVLGAAVIM), 395–415 (LFWFFGHPEVYVLIIPTFGFI), 434–454 (IWAIYVMAYMGYLVWGHHMYL), 468–488 (ITIMISMPATIKVVNWTLSLV), and 498–518 (FLFSMSFLLLFLVAGFTGMWL). A Cu cation-binding site is contributed by H401. The segment at residues 401–405 (HPEVY) is a cross-link (1'-histidyl-3'-tyrosine (His-Tyr)). Position 405 (Y405) interacts with O2. Residues H450 and H451 each coordinate Cu cation. Residues H528 and D529 each coordinate Mg(2+). Helical transmembrane passes span 533 to 553 (VVAHFHIMLSGAAITGIFSGF), 574 to 594 (LIYYSGGQWVAFVPQFYLGFS), and 613 to 633 (MSTAGHFITLIGIMFFFLMIF). H536 contacts heme a3. Residue H538 participates in Fe(II)-heme a binding.

This sequence belongs to the heme-copper respiratory oxidase family. In terms of assembly, component of the cytochrome c oxidase (complex IV, CIV), a multisubunit enzyme composed of a catalytic core of 3 subunits and several supernumerary subunits. The complex exists as a monomer or a dimer and forms supercomplexes (SCs) in the inner mitochondrial membrane with ubiquinol-cytochrome c oxidoreductase (cytochrome b-c1 complex, complex III, CIII). Requires heme as cofactor. Cu cation serves as cofactor.

It localises to the mitochondrion inner membrane. The enzyme catalyses 4 Fe(II)-[cytochrome c] + O2 + 8 H(+)(in) = 4 Fe(III)-[cytochrome c] + 2 H2O + 4 H(+)(out). Its pathway is energy metabolism; oxidative phosphorylation. Its function is as follows. Component of the cytochrome c oxidase, the last enzyme in the mitochondrial electron transport chain which drives oxidative phosphorylation. The respiratory chain contains 3 multisubunit complexes succinate dehydrogenase (complex II, CII), ubiquinol-cytochrome c oxidoreductase (cytochrome b-c1 complex, complex III, CIII) and cytochrome c oxidase (complex IV, CIV), that cooperate to transfer electrons derived from NADH and succinate to molecular oxygen, creating an electrochemical gradient over the inner membrane that drives transmembrane transport and the ATP synthase. Cytochrome c oxidase is the component of the respiratory chain that catalyzes the reduction of oxygen to water. Electrons originating from reduced cytochrome c in the intermembrane space (IMS) are transferred via the dinuclear copper A center (CU(A)) of subunit 2 and heme A of subunit 1 to the active site in subunit 1, a binuclear center (BNC) formed by heme A3 and copper B (CU(B)). The BNC reduces molecular oxygen to 2 water molecules using 4 electrons from cytochrome c in the IMS and 4 protons from the mitochondrial matrix. The protein is Cytochrome c oxidase subunit 1 (COI) of Tetrahymena pyriformis.